The following is a 728-amino-acid chain: Beta-porphyranase A (728 aa).

Positions 1 to 22 are cleaved as a signal peptide; the sequence is MSYKYIFLLSAFTLGVPPGIYC. Residues histidine 53, lysine 76, tryptophan 78, lysine 87, histidine 114, and asparagine 151 each contribute to the substrate site. Glutamate 152 (proton donor) is an active-site residue. Positions 235, 279, 326, and 331 each coordinate substrate. Glutamate 279 (nucleophile) is an active-site residue. Residues 599 to 701 enclose the CBM-cenC domain; it reads TLQNGTFSEG…AVSFDFNSTV (103 aa).

Belongs to the glycosyl hydrolase 86 family.

It catalyses the reaction Hydrolysis of beta-D-galactopyranose-(1-&gt;4)-alpha-L-galactopyranose-6-sulfate linkages in porphyran.. Functionally, cleaves the sulfated polysaccharide porphyran at the (1-&gt;4) linkages between beta-D-galactopyranose and alpha-L-galactopyranose-6-sulfate, forming mostly the disaccharide alpha-L-galactopyranose-6-sulfate-(1-&gt;3)-beta-D-galactose. Some longer oligosaccharides of even number of residues are also observed. Inactive on the non-sulfated agarose portion of the porphyran backbone. Can also use methylated galactoses. The chain is Beta-porphyranase A from Phocaeicola plebeius (strain DSM 17135 / JCM 12973 / CCUG 54634 / M2) (Bacteroides plebeius).